The chain runs to 329 residues: UDP-N-acetylenolpyruvoylglucosamine reductase (329 aa).

Residues 28–192 form the FAD-binding PCMH-type domain; it reads RVGGPADLLC…ARVEVRLHPG (165 aa). Arg-172 is a catalytic residue. The Proton donor role is filled by Ser-221. Residue Glu-291 is part of the active site. Positions 307 to 329 are disordered; the sequence is DGHAAAGGGPGAASGGVRPPEAT. The span at 311 to 320 shows a compositional bias: gly residues; that stretch reads AAGGGPGAAS.

Belongs to the MurB family. FAD serves as cofactor.

Its subcellular location is the cytoplasm. The catalysed reaction is UDP-N-acetyl-alpha-D-muramate + NADP(+) = UDP-N-acetyl-3-O-(1-carboxyvinyl)-alpha-D-glucosamine + NADPH + H(+). The protein operates within cell wall biogenesis; peptidoglycan biosynthesis. Functionally, cell wall formation. The protein is UDP-N-acetylenolpyruvoylglucosamine reductase of Anaeromyxobacter dehalogenans (strain 2CP-1 / ATCC BAA-258).